Reading from the N-terminus, the 196-residue chain is Serine recombinase PinR (196 aa).

The region spanning 3–143 is the Resolvase/invertase-type recombinase catalytic domain; it reads RIFAYCRIST…SGIVRARGAG (141 aa). Catalysis depends on Ser-11, which acts as the O-(5'-phospho-DNA)-serine intermediate.

Belongs to the site-specific recombinase resolvase family.

The chain is Serine recombinase PinR (pinR) from Escherichia coli (strain K12).